Consider the following 341-residue polypeptide: Ribosomal RNA small subunit methyltransferase H (341 aa).

Residues 47–49 (GGY), Asp-64, Phe-91, Asp-109, and Gln-116 each bind S-adenosyl-L-methionine.

It belongs to the methyltransferase superfamily. RsmH family.

It is found in the cytoplasm. It carries out the reaction cytidine(1402) in 16S rRNA + S-adenosyl-L-methionine = N(4)-methylcytidine(1402) in 16S rRNA + S-adenosyl-L-homocysteine + H(+). Functionally, specifically methylates the N4 position of cytidine in position 1402 (C1402) of 16S rRNA. The polypeptide is Ribosomal RNA small subunit methyltransferase H (Rhizobium leguminosarum bv. trifolii (strain WSM1325)).